The primary structure comprises 754 residues: FAD-dependent monooxygenase ntnA (754 aa).

The chain crosses the membrane as a helical span at residues 3–23; that stretch reads IPFKVLIIGGGVAGLTLAIML. FAD is bound by residues Glu-34, Gly-48, and Arg-109. The active site involves Tyr-218. Residues Asp-311 and Ala-324 each coordinate FAD. 4 consecutive transmembrane segments (helical) span residues 446–466, 486–506, 536–556, and 563–583; these read PLATFSWVTVLILAASSPWLA, AEVLELYISILSVSISGMWVI, ILPIYICFYILSSQSVVYYYM, and LGVAKALLPALLVVYTVSAVC. An N-linked (GlcNAc...) asparagine glycan is attached at Asn-586. A helical transmembrane segment spans residues 595–615; that stretch reads SWWFTADFAFPVVAYLSGMFL. Asn-616 is a glycosylation site (N-linked (GlcNAc...) asparagine). 2 helical membrane passes run 644–664 and 679–697; these read IAFVGFVAYAALASQYGTTIL and LASLTTVTTLWCLYSAWEL. Asn-701 carries N-linked (GlcNAc...) asparagine glycosylation. A helical transmembrane segment spans residues 712–732; that stretch reads LTILSSTIFGGPAATLAGTFI.

The protein belongs to the paxM FAD-dependent monooxygenase family. Requires FAD as cofactor.

It is found in the membrane. It functions in the pathway secondary metabolite biosynthesis; terpenoid biosynthesis. Its function is as follows. FAD-dependent monooxygenase; part of the gene cluster that mediates the biosynthesis of the meroterpenoids nectripenoids A and B, as well as cochliquninone D and isocochliquninone E. The pathway probably begins with the HR-PKS ntnH that catalyzes two chain-extension steps to form a reduced triketide, which then primes the SAT domain in the NR-PKS ntnG to initiate three more cycles of extension to give a linear hexaketide corresponding to the polyketide part of nectripenoids. The FAD-dependent monooxygenase ntnJ then performs an oxidative decarboxylation at C11 of the ntnH/ntnG product, via an electrophilic aromatic hydroxylation with concomitant ipso-decarboxylation. The membrane-bound polyprenyl transferase ntnF then introduces a farnesyl group before the FAD-dependent monooxygenase ntnK functions as the first epoxidase on terminal C12'-C13' olefin, followed by a second epoxidation on C7'-C8' catalyzed by ntnA. The terpene cyclase/mutase ntnI then initiates the sequential tricyclic ring formation through protonation of the terminal epoxide and catalyzes the regioselective and stereoselective 6/6/6-tricyclic ring formation. The cytochrome P450 monooxygenase ntnM may then hydroxylate C1'. This chain is FAD-dependent monooxygenase ntnA, found in Nectria sp.